The chain runs to 501 residues: Circadian clock oscillator protein KaiC (501 aa).

2 consecutive KaiC domains span residues 1 to 232 (MQVQ…ITVF) and 246 to 501 (IRIS…REKK). Positions 34, 35, 36, 37, 38, 74, 209, 210, 211, 213, 215, 275, 276, 277, 278, 279, and 280 each coordinate ATP. Threonine 38 is a binding site for Mg(2+). Mg(2+) contacts are provided by threonine 280 and glutamate 303. Residue tryptophan 316 participates in ATP binding. A Phosphoserine; by autocatalysis modification is found at serine 416. At threonine 417 the chain carries Phosphothreonine; by autocatalysis. Residues arginine 436, lysine 442, methionine 443, arginine 444, serine 446, histidine 448, and lysine 450 each contribute to the ATP site.

The protein belongs to the KaiC family. Homohexamer; hexamerization is dependent on ATP-binding. Component of the KaiBC complex. KaiC interacts with SasA, activating its autokinase function and leading to RpaA activation. It depends on Mg(2+) as a cofactor. Phosphorylated on serine and threonine residues by autocatalysis. Has a 4 step phosphorylation cycle; the autokinase acts first on Thr-417, then Ser-416. When Ser-416 is modified KaiC switches to an autophosphatase mode, acting first on phospho-Thr-417 then phospho-Ser-416.

The enzyme catalyses L-seryl-[protein] + ATP = O-phospho-L-seryl-[protein] + ADP + H(+). The catalysed reaction is L-threonyl-[protein] + ATP = O-phospho-L-threonyl-[protein] + ADP + H(+). It catalyses the reaction ATP + H2O = ADP + phosphate + H(+). Its function is as follows. Central component of the KaiBC oscillator complex, which constitutes the main circadian regulator in cyanobacteria. Its composition changes during the circadian cycle to control KaiC phosphorylation. Autophosphorylates and has a weak ATPase activity; ATPase activity defines the circadian period. This chain is Circadian clock oscillator protein KaiC, found in Prochlorococcus marinus (strain SARG / CCMP1375 / SS120).